The following is a 123-amino-acid chain: Histone H2B.3 (123 aa).

The interval 1–30 is disordered; the sequence is MPPKVSGKAAKKAGKAQKNISKGDKKKNRK. Ser-110 is a glycosylation site (O-linked (GlcNAc) serine). A Glycyl lysine isopeptide (Lys-Gly) (interchain with G-Cter in ubiquitin) cross-link involves residue Lys-118.

The protein belongs to the histone H2B family. The nucleosome is a histone octamer containing two molecules each of H2A, H2B, H3 and H4 assembled in one H3-H4 heterotetramer and two H2A-H2B heterodimers. The octamer wraps approximately 147 bp of DNA. In terms of processing, monoubiquitination of Lys-118 gives a specific tag for epigenetic transcriptional activation and is also prerequisite for histone H3 'Lys-4' and 'Lys-79' methylation. GlcNAcylation at Ser-110 promotes monoubiquitination of Lys-118. It fluctuates in response to extracellular glucose, and associates with transcribed genes.

It is found in the nucleus. Its subcellular location is the chromosome. Core component of nucleosome. Nucleosomes wrap and compact DNA into chromatin, limiting DNA accessibility to the cellular machineries which require DNA as a template. Histones thereby play a central role in transcription regulation, DNA repair, DNA replication and chromosomal stability. DNA accessibility is regulated via a complex set of post-translational modifications of histones, also called histone code, and nucleosome remodeling. In Tigriopus californicus (Marine copepod), this protein is Histone H2B.3.